A 134-amino-acid polypeptide reads, in one-letter code: Small ribosomal subunit protein uS8c (134 aa).

It belongs to the universal ribosomal protein uS8 family. Part of the 30S ribosomal subunit.

It is found in the plastid. The protein resides in the chloroplast. Functionally, one of the primary rRNA binding proteins, it binds directly to 16S rRNA central domain where it helps coordinate assembly of the platform of the 30S subunit. In Lepidium virginicum (Virginia pepperweed), this protein is Small ribosomal subunit protein uS8c (rps8).